We begin with the raw amino-acid sequence, 417 residues long: NADH-quinone oxidoreductase subunit D (417 aa).

The protein belongs to the complex I 49 kDa subunit family. NDH-1 is composed of 14 different subunits. Subunits NuoB, C, D, E, F, and G constitute the peripheral sector of the complex.

The protein localises to the cell inner membrane. It carries out the reaction a quinone + NADH + 5 H(+)(in) = a quinol + NAD(+) + 4 H(+)(out). NDH-1 shuttles electrons from NADH, via FMN and iron-sulfur (Fe-S) centers, to quinones in the respiratory chain. The immediate electron acceptor for the enzyme in this species is believed to be ubiquinone. Couples the redox reaction to proton translocation (for every two electrons transferred, four hydrogen ions are translocated across the cytoplasmic membrane), and thus conserves the redox energy in a proton gradient. This is NADH-quinone oxidoreductase subunit D from Paraburkholderia phytofirmans (strain DSM 17436 / LMG 22146 / PsJN) (Burkholderia phytofirmans).